Reading from the N-terminus, the 440-residue chain is MQAYFDQLDRVRYEGPKSTNPLAFRHYNPDELVLGKRMEDHLRFAACYWHTFCWNGADMFGVGSFDRPWQQPGEALELAKRKADVAFEFFHKLNVPYYCFHDVDVSPEGASLKEYLNNFAQMVDYLGEKQQQSGVKLLWGTANCFTNPRYGAGAATNPDPEVFSWAATQVVTAMNATHKLGGENYVLWGGREGYETLLNTDLRQEREQIGRFMQMVVEHKHKIGFRGTLLIEPKPQEPTKHQYDYDVATVYGFLKQFGLEKEIKVNIEANHATLAGHSFHHEIASAIALGIFGSVDANRGDPQLGWDTDQFPISVEENALVMYEIIKAGGFTTGGLNFDAKVRRQSTDKYDLFYGHIGAMDTMALALKVAARMIEDGELDKRVAKRYAGWNSELGQQILKGQLSLAEIAKYAEQHSLAPSHQSGHQELLENLVNHYLFDK.

Active-site residues include histidine 101 and aspartate 104. 7 residues coordinate Mg(2+): glutamate 232, glutamate 268, histidine 271, aspartate 296, aspartate 307, aspartate 309, and aspartate 339.

It belongs to the xylose isomerase family. In terms of assembly, homotetramer. It depends on Mg(2+) as a cofactor.

Its subcellular location is the cytoplasm. It catalyses the reaction alpha-D-xylose = alpha-D-xylulofuranose. This chain is Xylose isomerase, found in Enterobacter sp. (strain 638).